Reading from the N-terminus, the 340-residue chain is Ferrochelatase (340 aa).

2 residues coordinate Fe cation: His-189 and Glu-292.

Belongs to the ferrochelatase family.

It is found in the cytoplasm. The enzyme catalyses heme b + 2 H(+) = protoporphyrin IX + Fe(2+). The protein operates within porphyrin-containing compound metabolism; protoheme biosynthesis; protoheme from protoporphyrin-IX: step 1/1. Catalyzes the ferrous insertion into protoporphyrin IX. The polypeptide is Ferrochelatase (Pseudomonas syringae pv. tomato (strain ATCC BAA-871 / DC3000)).